We begin with the raw amino-acid sequence, 226 residues long: 7-cyano-7-deazaguanine synthase (226 aa).

Residue 10 to 20 (LSGGLDSATAA) participates in ATP binding. Zn(2+) is bound by residues cysteine 191, cysteine 199, cysteine 202, and cysteine 205.

Belongs to the QueC family. Requires Zn(2+) as cofactor.

It catalyses the reaction 7-carboxy-7-deazaguanine + NH4(+) + ATP = 7-cyano-7-deazaguanine + ADP + phosphate + H2O + H(+). Its pathway is purine metabolism; 7-cyano-7-deazaguanine biosynthesis. Catalyzes the ATP-dependent conversion of 7-carboxy-7-deazaguanine (CDG) to 7-cyano-7-deazaguanine (preQ(0)). The sequence is that of 7-cyano-7-deazaguanine synthase from Synechococcus sp. (strain CC9902).